Reading from the N-terminus, the 504-residue chain is Glutamate--tRNA ligase (504 aa).

Residues 25-35 carry the 'HIGH' region motif; sequence PSPTGNPHVGL. Positions 122, 124, 149, and 151 each coordinate Zn(2+). The short motif at 270–274 is the 'KMSKS' region element; the sequence is KLSKR. Position 273 (lysine 273) interacts with ATP.

The protein belongs to the class-I aminoacyl-tRNA synthetase family. Glutamate--tRNA ligase type 1 subfamily. In terms of assembly, monomer. Requires Zn(2+) as cofactor.

The protein resides in the cytoplasm. The catalysed reaction is tRNA(Glu) + L-glutamate + ATP = L-glutamyl-tRNA(Glu) + AMP + diphosphate. In terms of biological role, catalyzes the attachment of glutamate to tRNA(Glu) in a two-step reaction: glutamate is first activated by ATP to form Glu-AMP and then transferred to the acceptor end of tRNA(Glu). The sequence is that of Glutamate--tRNA ligase from Streptomyces griseus subsp. griseus (strain JCM 4626 / CBS 651.72 / NBRC 13350 / KCC S-0626 / ISP 5235).